Here is a 461-residue protein sequence, read N- to C-terminus: GTPase Der (461 aa).

EngA-type G domains lie at 25 to 188 (PVVA…PNVA) and 198 to 371 (RRVA…ASWD). Residues 31-38 (GRPNVGKS), 78-82 (DTGGW), 140-143 (NKVD), 204-211 (GKPNVGKS), 251-255 (DTAGL), and 316-319 (NKWD) each bind GTP. A KH-like domain is found at 372-454 (TRIATGPLNI…PIRINVRVRE (83 aa)).

It belongs to the TRAFAC class TrmE-Era-EngA-EngB-Septin-like GTPase superfamily. EngA (Der) GTPase family. In terms of assembly, associates with the 50S ribosomal subunit.

Functionally, GTPase that plays an essential role in the late steps of ribosome biogenesis. This Mycobacterium leprae (strain TN) protein is GTPase Der.